The primary structure comprises 395 residues: Tyrosine--tRNA ligase (395 aa).

The 'HIGH' region signature appears at P42–H51. Positions K226–S230 match the 'KMSKS' region motif. K229 lines the ATP pocket. The S4 RNA-binding domain maps to I334 to L394.

The protein belongs to the class-I aminoacyl-tRNA synthetase family. TyrS type 2 subfamily. Homodimer.

Its subcellular location is the cytoplasm. The catalysed reaction is tRNA(Tyr) + L-tyrosine + ATP = L-tyrosyl-tRNA(Tyr) + AMP + diphosphate + H(+). In terms of biological role, catalyzes the attachment of tyrosine to tRNA(Tyr) in a two-step reaction: tyrosine is first activated by ATP to form Tyr-AMP and then transferred to the acceptor end of tRNA(Tyr). This chain is Tyrosine--tRNA ligase, found in Photobacterium profundum (strain SS9).